The chain runs to 459 residues: UDP-N-acetylmuramoyl-tripeptide--D-alanyl-D-alanine ligase (459 aa).

ATP is bound at residue 121–127 (GSSGKTT).

This sequence belongs to the MurCDEF family. MurF subfamily.

The protein resides in the cytoplasm. The catalysed reaction is D-alanyl-D-alanine + UDP-N-acetyl-alpha-D-muramoyl-L-alanyl-gamma-D-glutamyl-meso-2,6-diaminopimelate + ATP = UDP-N-acetyl-alpha-D-muramoyl-L-alanyl-gamma-D-glutamyl-meso-2,6-diaminopimeloyl-D-alanyl-D-alanine + ADP + phosphate + H(+). The protein operates within cell wall biogenesis; peptidoglycan biosynthesis. Functionally, involved in cell wall formation. Catalyzes the final step in the synthesis of UDP-N-acetylmuramoyl-pentapeptide, the precursor of murein. The polypeptide is UDP-N-acetylmuramoyl-tripeptide--D-alanyl-D-alanine ligase (Treponema pallidum (strain Nichols)).